Consider the following 130-residue polypeptide: uncharacterized protein (130 aa).

This is an uncharacterized protein from Sulfolobus islandicus filamentous virus (isolate Iceland/Hveragerdi) (SIFV).